The primary structure comprises 706 residues: Septin ring organizing protein mid2 (706 aa).

2 disordered regions span residues serine 62–threonine 102 and aspartate 145–proline 180. Polar residues-rich tracts occupy residues tyrosine 81–serine 90 and asparagine 149–glycine 169. Residue serine 379 is modified to Phosphoserine. Residues threonine 583–glycine 688 form the PH domain.

The protein belongs to the BUD4 family.

Its subcellular location is the cytoplasm. It is found in the cell cortex. It localises to the cytoskeleton. Its function is as follows. Responsible for the proper stability and function of septins during cytokinesis. Required for the correct formation of the medial septin ring structure in mitosis and for the proper localization of endo-glucanases agn1 and eng1, which are needed for efficient cell separation. May act as a landmark for the localization of hydrolytic proteins to the medial region. The sequence is that of Septin ring organizing protein mid2 (mid2) from Schizosaccharomyces pombe (strain 972 / ATCC 24843) (Fission yeast).